The sequence spans 342 residues: Methylthioribose-1-phosphate isomerase (342 aa).

Substrate contacts are provided by residues 49 to 51 (RGA), Arg-86, and Gln-187. Residue Asp-228 is the Proton donor of the active site. Residue 238-239 (NK) coordinates substrate.

This sequence belongs to the eIF-2B alpha/beta/delta subunits family. MtnA subfamily.

It carries out the reaction 5-(methylsulfanyl)-alpha-D-ribose 1-phosphate = 5-(methylsulfanyl)-D-ribulose 1-phosphate. Its pathway is amino-acid biosynthesis; L-methionine biosynthesis via salvage pathway; L-methionine from S-methyl-5-thio-alpha-D-ribose 1-phosphate: step 1/6. In terms of biological role, catalyzes the interconversion of methylthioribose-1-phosphate (MTR-1-P) into methylthioribulose-1-phosphate (MTRu-1-P). This is Methylthioribose-1-phosphate isomerase from Klebsiella pneumoniae subsp. pneumoniae (strain ATCC 700721 / MGH 78578).